Here is a 141-residue protein sequence, read N- to C-terminus: MEIRVFRQEDFEEVITLWERCDLLRPWNDPEMDIERKMNHDVSLFLVAEVNGEVVGTVMGGYDGHRGSAYYLGVHPEFRGRGIANALLNRLEKKLIARGCPKIQINVPEDNDMVLGMYERLGYEHADVLSLGKRLIEDEEY.

The N-acetyltransferase domain maps to M1–Y141.

The protein belongs to the acetyltransferase family. YpeA subfamily.

This Escherichia coli O157:H7 protein is Acetyltransferase YpeA.